The sequence spans 176 residues: Tubulin polymerization-promoting protein family member 3 (176 aa).

Ala2 carries the post-translational modification N-acetylalanine. Residues 132 to 152 (TGSHKERFDESGKGKGIAGRQ) form a disordered region. The span at 134-144 (SHKERFDESGK) shows a compositional bias: basic and acidic residues.

This sequence belongs to the TPPP family.

The protein resides in the cytoplasm. The protein localises to the cytoskeleton. Functionally, regulator of microtubule dynamic that has microtubule bundling activity. Required for embryo implantation; possibly by regulating beta-catenin. Also required for decidualization via regulation of beta-catenin. The polypeptide is Tubulin polymerization-promoting protein family member 3 (Mus musculus (Mouse)).